Consider the following 449-residue polypeptide: ATP-dependent protease ATPase subunit HslU (449 aa).

Residues isoleucine 18, 60 to 65 (GVGKTE), aspartate 261, glutamate 327, and arginine 399 contribute to the ATP site.

This sequence belongs to the ClpX chaperone family. HslU subfamily. As to quaternary structure, a double ring-shaped homohexamer of HslV is capped on each side by a ring-shaped HslU homohexamer. The assembly of the HslU/HslV complex is dependent on binding of ATP.

It localises to the cytoplasm. ATPase subunit of a proteasome-like degradation complex; this subunit has chaperone activity. The binding of ATP and its subsequent hydrolysis by HslU are essential for unfolding of protein substrates subsequently hydrolyzed by HslV. HslU recognizes the N-terminal part of its protein substrates and unfolds these before they are guided to HslV for hydrolysis. The polypeptide is ATP-dependent protease ATPase subunit HslU (Oleidesulfovibrio alaskensis (strain ATCC BAA-1058 / DSM 17464 / G20) (Desulfovibrio alaskensis)).